A 575-amino-acid polypeptide reads, in one-letter code: Interleukin-10 receptor subunit alpha (575 aa).

Positions 1 to 16 (MLSRLLPFLVTISSLS) are cleaved as a signal peptide. The Extracellular segment spans residues 17-241 (LEFIAYGTEL…QYFTVTNLSI (225 aa)). Asparagine 50, asparagine 66, asparagine 113, and asparagine 182 each carry an N-linked (GlcNAc...) asparagine glycan. Residues cysteine 204 and cysteine 225 are joined by a disulfide bond. The N-linked (GlcNAc...) asparagine glycan is linked to asparagine 238. Residues 242-262 (LVISMLLFCGILVCLVLQWYI) form a helical membrane-spanning segment. Over 263 to 575 (RHPGKLPTVL…PLISSLQVEE (313 aa)) the chain is Cytoplasmic. Phosphotyrosine is present on residues tyrosine 443 and tyrosine 493.

The protein belongs to the type II cytokine receptor family. As to quaternary structure, interacts with IL10. Interacts with IL10RB. Interacts (via its cytoplasmic domain) with JAK1 (via N-terminus). Interacts with BTRC; this interaction leads to IL10RA ubiquitination and subsequent degradation. Interacts with STAT3. Phosphorylated. Phosphorylation of the cytoplasmic tail induced STAT3 activation. Post-translationally, ubiquitinated by BTRC; ubiquitination leads to endocytosis and subsequent degradation of IL10RA.

It is found in the cell membrane. The protein localises to the cytoplasm. Cell surface receptor for the cytokine IL10 that participates in IL10-mediated anti-inflammatory functions, limiting excessive tissue disruption caused by inflammation. Upon binding to IL10, induces a conformational change in IL10RB, allowing IL10RB to bind IL10 as well. In turn, the heterotetrameric assembly complex, composed of two subunits of IL10RA and IL10RB, activates the kinases JAK1 and TYK2 that are constitutively associated with IL10RA and IL10RB respectively. These kinases then phosphorylate specific tyrosine residues in the intracellular domain in IL10RA leading to the recruitment and subsequent phosphorylation of STAT3. Once phosphorylated, STAT3 homodimerizes, translocates to the nucleus and activates the expression of anti-inflammatory genes. In addition, IL10RA-mediated activation of STAT3 inhibits starvation-induced autophagy. The chain is Interleukin-10 receptor subunit alpha (Il10ra) from Mus musculus (Mouse).